The sequence spans 72 residues: MSELFSVPYFIENLKQHIEMNQSEDKIHAMNSYYRSVVSTLVQDQLTKNAVVLKRIQHLDEAYNKVKRGESK.

This is an uncharacterized protein from Bacillus subtilis (strain 168).